Consider the following 158-residue polypeptide: 2-C-methyl-D-erythritol 2,4-cyclodiphosphate synthase (158 aa).

Asp9 and His11 together coordinate a divalent metal cation. 4-CDP-2-C-methyl-D-erythritol 2-phosphate is bound by residues 9–11 and 35–36; these read DVH and HS. His43 contacts a divalent metal cation. 4-CDP-2-C-methyl-D-erythritol 2-phosphate-binding positions include 57-59, 62-66, 133-136, Phe140, and Arg143; these read DIG, FPDTD, and TTTE.

Belongs to the IspF family. As to quaternary structure, homotrimer. Requires a divalent metal cation as cofactor.

The catalysed reaction is 4-CDP-2-C-methyl-D-erythritol 2-phosphate = 2-C-methyl-D-erythritol 2,4-cyclic diphosphate + CMP. It functions in the pathway isoprenoid biosynthesis; isopentenyl diphosphate biosynthesis via DXP pathway; isopentenyl diphosphate from 1-deoxy-D-xylulose 5-phosphate: step 4/6. Functionally, involved in the biosynthesis of isopentenyl diphosphate (IPP) and dimethylallyl diphosphate (DMAPP), two major building blocks of isoprenoid compounds. Catalyzes the conversion of 4-diphosphocytidyl-2-C-methyl-D-erythritol 2-phosphate (CDP-ME2P) to 2-C-methyl-D-erythritol 2,4-cyclodiphosphate (ME-CPP) with a corresponding release of cytidine 5-monophosphate (CMP). The sequence is that of 2-C-methyl-D-erythritol 2,4-cyclodiphosphate synthase from Actinobacillus pleuropneumoniae serotype 5b (strain L20).